A 125-amino-acid chain; its full sequence is Fluoride-specific ion channel FluC (125 aa).

The next 4 helical transmembrane spans lie at 4–24, 32–52, 68–88, and 100–120; these read VIYV…VGIV, FLPW…GLFA, LLIT…LDTV, and AFYV…GLAV. Na(+)-binding residues include Gly-75 and Thr-78.

It belongs to the fluoride channel Fluc/FEX (TC 1.A.43) family.

It is found in the cell inner membrane. The enzyme catalyses fluoride(in) = fluoride(out). Its activity is regulated as follows. Na(+) is not transported, but it plays an essential structural role and its presence is essential for fluoride channel function. In terms of biological role, fluoride-specific ion channel. Important for reducing fluoride concentration in the cell, thus reducing its toxicity. The protein is Fluoride-specific ion channel FluC of Allorhizobium ampelinum (strain ATCC BAA-846 / DSM 112012 / S4) (Agrobacterium vitis (strain S4)).